The chain runs to 1401 residues: DNA-directed RNA polymerase subunit beta' (1401 aa).

Zn(2+)-binding residues include Cys70, Cys72, Cys85, and Cys88. The Mg(2+) site is built by Asp460, Asp462, and Asp464. Residues Cys808, Cys882, Cys889, and Cys892 each coordinate Zn(2+).

This sequence belongs to the RNA polymerase beta' chain family. The RNAP catalytic core consists of 2 alpha, 1 beta, 1 beta' and 1 omega subunit. When a sigma factor is associated with the core the holoenzyme is formed, which can initiate transcription. It depends on Mg(2+) as a cofactor. Zn(2+) is required as a cofactor.

The enzyme catalyses RNA(n) + a ribonucleoside 5'-triphosphate = RNA(n+1) + diphosphate. In terms of biological role, DNA-dependent RNA polymerase catalyzes the transcription of DNA into RNA using the four ribonucleoside triphosphates as substrates. The sequence is that of DNA-directed RNA polymerase subunit beta' from Legionella pneumophila (strain Lens).